The primary structure comprises 231 residues: 7-cyano-7-deazaguanine synthase (231 aa).

Position 8–18 (8–18 (FSGGQDSTTCL)) interacts with ATP. 4 residues coordinate Zn(2+): cysteine 187, cysteine 196, cysteine 199, and cysteine 202.

This sequence belongs to the QueC family. Zn(2+) is required as a cofactor.

It carries out the reaction 7-carboxy-7-deazaguanine + NH4(+) + ATP = 7-cyano-7-deazaguanine + ADP + phosphate + H2O + H(+). It participates in purine metabolism; 7-cyano-7-deazaguanine biosynthesis. Its function is as follows. Catalyzes the ATP-dependent conversion of 7-carboxy-7-deazaguanine (CDG) to 7-cyano-7-deazaguanine (preQ(0)). The protein is 7-cyano-7-deazaguanine synthase of Vibrio cholerae serotype O1 (strain ATCC 39541 / Classical Ogawa 395 / O395).